A 421-amino-acid polypeptide reads, in one-letter code: UV-B-induced protein At3g17800, chloroplastic (421 aa).

Disordered regions lie at residues 1 to 40 (MDAL…RSGS) and 74 to 95 (VRAS…IAPL). The transit peptide at 1 to 75 (MDALTSSLVR…AKTRRSFVVR (75 aa)) directs the protein to the chloroplast. Residues 16–28 (SRTSDNGSGSMFL) are compositionally biased toward polar residues. Residues 74 to 88 (VRASSASNDASSGSS) show a composition bias toward low complexity.

The protein localises to the plastid. The protein resides in the chloroplast. The chain is UV-B-induced protein At3g17800, chloroplastic from Arabidopsis thaliana (Mouse-ear cress).